A 76-amino-acid polypeptide reads, in one-letter code: Large ribosomal subunit protein bL31 (76 aa).

Belongs to the bacterial ribosomal protein bL31 family. Type A subfamily. In terms of assembly, part of the 50S ribosomal subunit.

Functionally, binds the 23S rRNA. In Picosynechococcus sp. (strain ATCC 27264 / PCC 7002 / PR-6) (Agmenellum quadruplicatum), this protein is Large ribosomal subunit protein bL31.